Consider the following 231-residue polypeptide: Large ribosomal subunit protein uL1 (231 aa).

The protein belongs to the universal ribosomal protein uL1 family. As to quaternary structure, part of the 50S ribosomal subunit.

Functionally, binds directly to 23S rRNA. The L1 stalk is quite mobile in the ribosome, and is involved in E site tRNA release. Its function is as follows. Protein L1 is also a translational repressor protein, it controls the translation of the L11 operon by binding to its mRNA. This is Large ribosomal subunit protein uL1 from Alkalilimnicola ehrlichii (strain ATCC BAA-1101 / DSM 17681 / MLHE-1).